The primary structure comprises 459 residues: Aluminum-activated malate transporter 1 (459 aa).

Residues 1–52 (MDIDHGRESDGEMVGTIASCGLLLHSLLAGLGRRAAGFARKVGGAAREDPRR) are Extracellular-facing. 2 helical membrane-spanning segments follow: residues 53-73 (VAHS…YFVT) and 74-94 (PLFN…VVVM). Residues 95–108 (EYTVGATLSKGLNR) lie on the Extracellular side of the membrane. The chain crosses the membrane as a helical span at residues 109–129 (ALATLVAGCIAVGAHQLAELA). The Cytoplasmic segment spans residues 130-137 (ERCGDQGE). A helical membrane pass occupies residues 138-158 (PIVLTVLVFFVASAATFLRFI). Residues 159 to 160 (PE) lie on the Extracellular side of the membrane. Residues 161–181 (IKAKYDYGVTIFILTFGLVAV) form a helical membrane-spanning segment. Residues 182 to 199 (SSYRVEELIQLAHQRFYT) lie on the Cytoplasmic side of the membrane. Residues 200–220 (IAVGVFICLCTTVFLFPVWAG) traverse the membrane as a helical segment. At 221–459 (EDVHKLASGN…DEPLPDVVIL (239 aa)) the chain is on the extracellular side.

This sequence belongs to the aromatic acid exporter (TC 2.A.85) family. Detected in root tips.

The protein resides in the cell membrane. With respect to regulation, activated by external aluminum. The enhancement of malate transport is not due to alteration in the selectivity properties but is due to an increased anion permeability. Functionally, malate transporter critical for aluminum tolerance. Permeable to chloride, nitrate, sulfate and malate. In Triticum aestivum (Wheat), this protein is Aluminum-activated malate transporter 1 (ALMT1).